We begin with the raw amino-acid sequence, 398 residues long: Tryptophan synthase beta chain (398 aa).

Lysine 87 is subject to N6-(pyridoxal phosphate)lysine.

Belongs to the TrpB family. In terms of assembly, tetramer of two alpha and two beta chains. Requires pyridoxal 5'-phosphate as cofactor.

The catalysed reaction is (1S,2R)-1-C-(indol-3-yl)glycerol 3-phosphate + L-serine = D-glyceraldehyde 3-phosphate + L-tryptophan + H2O. Its pathway is amino-acid biosynthesis; L-tryptophan biosynthesis; L-tryptophan from chorismate: step 5/5. In terms of biological role, the beta subunit is responsible for the synthesis of L-tryptophan from indole and L-serine. The polypeptide is Tryptophan synthase beta chain (Blochmanniella floridana).